The following is a 185-amino-acid chain: MSSYLRHCSSRLPGKTCSRERNNFPLRLSGGISGEGIHPGFPIRMVQYAALALSTCCFSARDMDIDAPRGVSFLGIKWLAANQTRGMWDGSTISSPHTHVFRDISRTDSFFLFFFFFASHEIGTYLSAEESALDRYLSRFCGERESWDKCKKEMVGTKGQYTGPAVPSVPTTNLNDIGDPTKTVQ.

Residues 160-185 (QYTGPAVPSVPTTNLNDIGDPTKTVQ) form a disordered region.

This is an uncharacterized protein from Saccharomyces cerevisiae (strain ATCC 204508 / S288c) (Baker's yeast).